The primary structure comprises 449 residues: MNRFFRENNIFDAPRTGGKGRAKSLPAPAANSPPSPVRPPPKSNIKPPTRISPPKQPMCTSPAKPLEHSSIVSKKPVVNRKDGYFVPPEFGNKFEGLPAYSDKLDFKQERDLRMHFMSDLERDIMKATLKFSTNYIMGYINSKDMRMTGKFASRPVKYKKTMEHMSDSRCTTCNYRFKDNTREWFLYVVVHIEKPLDDPDRIDICCQKCYLYHNVPKTSYEIYPSINLVDLSYLARERFFYQYIFPVSLEHTTEVKELRIDDHNCKVFEIIRRIIRNHKEPNERIQTIDLSTTGGLVLRETYTNIVLQRYRSMCTRPDVVDDVNCFILQEPSEMMAALQDNRFSGIKGTVFATVKVKKFTQVLDGAITFPLKPTTNNYCKLCKKTKLYYKNPVLYCTKCGFTNVYHFPEYSKFMYYFEAIKSFEMHNEMIIYYDLKMYKKLINIVNNNV.

The tract at residues Met-1–His-68 is disordered. Residues Asn-31–Lys-42 show a composition bias toward pro residues. The C4-type zinc-finger motif lies at Cys-379–Cys-399.

The protein localises to the virion. Its subcellular location is the host cytoplasm. The protein resides in the host nucleus. It localises to the host cell membrane. In terms of biological role, may act as a packaging protein or as a structural component associated with intranuclear baculovirus virion assembly. The sequence is that of Early 53 kDa protein (ME53) from Autographa californica nuclear polyhedrosis virus (AcMNPV).